The primary structure comprises 179 residues: Lipoprotein signal peptidase (179 aa).

Transmembrane regions (helical) follow at residues L10–I30, V48–F68, W75–L95, and N101–I121. Residues D131 and D149 contribute to the active site. A helical membrane pass occupies residues H141 to I161.

This sequence belongs to the peptidase A8 family.

The protein resides in the cell inner membrane. It carries out the reaction Release of signal peptides from bacterial membrane prolipoproteins. Hydrolyzes -Xaa-Yaa-Zaa-|-(S,diacylglyceryl)Cys-, in which Xaa is hydrophobic (preferably Leu), and Yaa (Ala or Ser) and Zaa (Gly or Ala) have small, neutral side chains.. The protein operates within protein modification; lipoprotein biosynthesis (signal peptide cleavage). Functionally, this protein specifically catalyzes the removal of signal peptides from prolipoproteins. In Acinetobacter baylyi (strain ATCC 33305 / BD413 / ADP1), this protein is Lipoprotein signal peptidase.